The primary structure comprises 461 residues: Cysteine--tRNA ligase (461 aa).

Cys-28 is a Zn(2+) binding site. The 'HIGH' region motif lies at 30–40 (ITVYDLCHIGH). Zn(2+) is bound by residues Cys-209, His-234, and Glu-238. The 'KMSKS' region motif lies at 266-270 (KMSKS). Lys-269 serves as a coordination point for ATP.

It belongs to the class-I aminoacyl-tRNA synthetase family. As to quaternary structure, monomer. Zn(2+) serves as cofactor.

It localises to the cytoplasm. The catalysed reaction is tRNA(Cys) + L-cysteine + ATP = L-cysteinyl-tRNA(Cys) + AMP + diphosphate. This Escherichia coli O127:H6 (strain E2348/69 / EPEC) protein is Cysteine--tRNA ligase.